The following is a 151-amino-acid chain: Probable transcriptional regulator syrB2 (151 aa).

The segment at 1 to 61 (MADESNTGSI…PRRYSEQQRK (61 aa)) is disordered. Positions 11-23 (AAAVAPNADVKAP) are enriched in low complexity. Basic residues predominate over residues 24–35 (AAKKKRSPRRQK).

This sequence belongs to the SyrB family.

Seems to affect the transcription of cya3. May be negatively autoregulated. This is Probable transcriptional regulator syrB2 (syrB2) from Rhizobium meliloti (strain 1021) (Ensifer meliloti).